Here is a 445-residue protein sequence, read N- to C-terminus: Rab GDP dissociation inhibitor beta (445 aa).

Met1 is subject to N-acetylmethionine. Lys112 carries the N6-acetyllysine modification. Ser130 is modified (phosphoserine). N6-acetyllysine is present on Lys269. The residue at position 382 (Ser382) is a Phosphoserine.

Belongs to the Rab GDI family. Interacts with RHOH. Interacts with the GDP-bound inactive forms of RAB3A, RAB3B, RAB3C, RAB5A, RAB5B, RAB5C, RAB8A, RAB8B, RAB10, RAB12, RAB35, and RAB43; binds RAB3D to a lesser extent. Interacts with DZIP1; this interaction negatively regulates the interaction of GDI2 with GDP-bound RAB8A.

The protein resides in the cytoplasm. Its subcellular location is the membrane. It localises to the golgi apparatus. It is found in the trans-Golgi network. Functionally, GDP-dissociation inhibitor preventing the GDP to GTP exchange of most Rab proteins. By keeping these small GTPases in their inactive GDP-bound form regulates intracellular membrane trafficking. Negatively regulates protein transport to the cilium and ciliogenesis through the inhibition of RAB8A. This is Rab GDP dissociation inhibitor beta (GDI2) from Sus scrofa (Pig).